Reading from the N-terminus, the 265-residue chain is Ribosomal RNA small subunit methyltransferase A (265 aa).

S-adenosyl-L-methionine contacts are provided by N13, L15, G40, E61, D85, and N103.

This sequence belongs to the class I-like SAM-binding methyltransferase superfamily. rRNA adenine N(6)-methyltransferase family. RsmA subfamily.

The protein localises to the cytoplasm. It catalyses the reaction adenosine(1518)/adenosine(1519) in 16S rRNA + 4 S-adenosyl-L-methionine = N(6)-dimethyladenosine(1518)/N(6)-dimethyladenosine(1519) in 16S rRNA + 4 S-adenosyl-L-homocysteine + 4 H(+). Its function is as follows. Specifically dimethylates two adjacent adenosines (A1518 and A1519) in the loop of a conserved hairpin near the 3'-end of 16S rRNA in the 30S particle. May play a critical role in biogenesis of 30S subunits. The chain is Ribosomal RNA small subunit methyltransferase A from Aromatoleum aromaticum (strain DSM 19018 / LMG 30748 / EbN1) (Azoarcus sp. (strain EbN1)).